We begin with the raw amino-acid sequence, 731 residues long: Cucumisin (731 aa).

An N-terminal signal peptide occupies residues 1 to 22 (MSSSLIFKLFFFSLFFSNRLAS). A propeptide spans 23–110 (RLDSDDDGKN…VFLNEMNELH (88 aa)) (activation peptide). One can recognise an Inhibitor I9 domain in the interval 34 to 110 (YIVYMGRKLE…VFLNEMNELH (77 aa)). Positions 114–584 (SWDFLGFPLT…SGHVNPLKAV (471 aa)) constitute a Peptidase S8 domain. The Charge relay system role is filled by D140. C166 and C174 are oxidised to a cystine. H204 serves as the catalytic Charge relay system. 2 disulfide bridges follow: C245–C250 and C380–C397. N-linked (GlcNAc...) asparagine glycosylation is present at N466. The Charge relay system role is filled by S525. Positions 616–731 (GDYSACTSGN…RSPITITSLV (116 aa)) are excised as a propeptide. An N-linked (GlcNAc...) asparagine glycan is attached at N652.

It belongs to the peptidase S8 family. Monomer and dimer. In terms of processing, the C-terminal propeptide is autocleaved. Specifically expressed in fruits. Expressed in sarcocarp (at protein level).

It is found in the secreted. It catalyses the reaction Hydrolysis of proteins with broad specificity.. The polypeptide is Cucumisin (Cucumis melo (Muskmelon)).